The primary structure comprises 480 residues: Molybdate-anion transporter (480 aa).

A run of 12 helical transmembrane segments spans residues 1–21, 44–63, 78–98, 129–149, 177–197, 199–219, 274–294, 304–324, 339–359, 369–389, 401–421, and 441–461; these read MFVTAYFAVISLLALCVGLEL, ATFLRAYLLALWADWLQGPY, IAILYVCGLASCVLFAPFSGW, FVLIVGRILGGLSTSLLTTTF, TWNHGLAVGAGLVANLLAEWL, LGPVAPFLLAVPFLACCAWFV, VMLLGGVQALFESVLYIFIFL, SPLGIVFSCFMAASMVGSLLF, VLCVAVLMAFFSFFMLTFSTV, FLAFLLLELACGLYFPALNFL, SVLAWFRLPLHLLACLGLLAL, and FGGCAVMMLAALMAVVSLFTL.

Belongs to the major facilitator superfamily.

The protein resides in the cell membrane. Functionally, mediates high-affinity intracellular uptake of the rare oligo-element molybdenum. This is Molybdate-anion transporter (mfsd5) from Takifugu rubripes (Japanese pufferfish).